The following is a 216-amino-acid chain: Talanin (216 aa).

In terms of tissue distribution, isoform 4 is expressed in placenta, lung, kidney and pancreas.

May play a role in uric acid excretion. The protein is Talanin (ZNF365) of Homo sapiens (Human).